The chain runs to 725 residues: LPS-assembly protein LptD (725 aa).

The signal sequence occupies residues 1-25; sequence MSLLSKLHLILYICLLLLPLRFVNA.

It belongs to the LptD family. In terms of assembly, component of the lipopolysaccharide transport and assembly complex. Interacts with LptE and LptA.

Its subcellular location is the cell outer membrane. Its function is as follows. Together with LptE, is involved in the assembly of lipopolysaccharide (LPS) at the surface of the outer membrane. In Nitrosomonas eutropha (strain DSM 101675 / C91 / Nm57), this protein is LPS-assembly protein LptD.